Consider the following 613-residue polypeptide: Probable Xaa-Pro aminopeptidase P (613 aa).

Asp-408, Asp-419, Glu-517, and Glu-531 together coordinate Mn(2+).

It belongs to the peptidase M24B family. Requires Mn(2+) as cofactor.

It carries out the reaction Release of any N-terminal amino acid, including proline, that is linked to proline, even from a dipeptide or tripeptide.. In terms of biological role, catalyzes the removal of a penultimate prolyl residue from the N-termini of peptides. In Penicillium rubens (strain ATCC 28089 / DSM 1075 / NRRL 1951 / Wisconsin 54-1255) (Penicillium chrysogenum), this protein is Probable Xaa-Pro aminopeptidase P (ampp).